The chain runs to 350 residues: 2-oxoisovalerate dehydrogenase subunit beta (350 aa).

Heterodimer of an alpha and a beta chain. Thiamine diphosphate serves as cofactor.

It catalyses the reaction N(6)-[(R)-lipoyl]-L-lysyl-[protein] + 3-methyl-2-oxobutanoate + H(+) = N(6)-[(R)-S(8)-2-methylpropanoyldihydrolipoyl]-L-lysyl-[protein] + CO2. Its function is as follows. The branched-chain alpha-keto dehydrogenase complex catalyzes the overall conversion of alpha-keto acids to acyl-CoA and CO(2). It contains multiple copies of three enzymatic components: branched-chain alpha-keto acid decarboxylase (E1), lipoamide acyltransferase (E2) and lipoamide dehydrogenase (E3). The chain is 2-oxoisovalerate dehydrogenase subunit beta (bkdA2) from Pseudomonas aeruginosa (strain ATCC 15692 / DSM 22644 / CIP 104116 / JCM 14847 / LMG 12228 / 1C / PRS 101 / PAO1).